A 342-amino-acid polypeptide reads, in one-letter code: Ribosomal RNA small subunit methyltransferase C (342 aa).

Belongs to the methyltransferase superfamily. RsmC family. As to quaternary structure, monomer.

The protein localises to the cytoplasm. The enzyme catalyses guanosine(1207) in 16S rRNA + S-adenosyl-L-methionine = N(2)-methylguanosine(1207) in 16S rRNA + S-adenosyl-L-homocysteine + H(+). Specifically methylates the guanine in position 1207 of 16S rRNA in the 30S particle. This is Ribosomal RNA small subunit methyltransferase C from Shewanella oneidensis (strain ATCC 700550 / JCM 31522 / CIP 106686 / LMG 19005 / NCIMB 14063 / MR-1).